The primary structure comprises 144 residues: Deoxyuridine 5'-triphosphate nucleotidohydrolase (144 aa).

Substrate is bound by residues 63–65, Asn-76, and 80–82; these read RSG and TID.

The protein belongs to the dUTPase family. It depends on Mg(2+) as a cofactor.

The enzyme catalyses dUTP + H2O = dUMP + diphosphate + H(+). Its pathway is pyrimidine metabolism; dUMP biosynthesis; dUMP from dCTP (dUTP route): step 2/2. This enzyme is involved in nucleotide metabolism: it produces dUMP, the immediate precursor of thymidine nucleotides and it decreases the intracellular concentration of dUTP so that uracil cannot be incorporated into DNA. The polypeptide is Deoxyuridine 5'-triphosphate nucleotidohydrolase (Bacteroides fragilis (strain YCH46)).